We begin with the raw amino-acid sequence, 508 residues long: Protein NODULATION SIGNALING PATHWAY 2 (508 aa).

The segment at 75–98 is disordered; sequence ITTTTTTTTTTDEEEEEMETTTTT. Positions 108–500 constitute a GRAS domain; the sequence is VGDDSKGLKL…RRLLSASLWT (393 aa). The leucine repeat I (LRI) stretch occupies residues 115 to 190; the sequence is LKLVHLLMAG…NNHHHHNNNK (76 aa). The tract at residues 209 to 273 is VHIID; the sequence is FQLLQDMSPY…NNGPHLRITA (65 aa). Residues 240–244 carry the VHIID motif; the sequence is VHVID. The tract at residues 289–321 is leucine repeat II (LRII); the sequence is ETGRRLTSFAASLGQPFSFHHCRLDSDETFRPS. The PFYRE stretch occupies residues 331-422; sequence LVFNCMLNLP…RVFFGPRIAG (92 aa). The SAW stretch occupies residues 425-500; it reads GRIYRTGGEE…RRLLSASLWT (76 aa).

It belongs to the GRAS family. Interacts with RAM1. Interacts with IPN2 and RAD1. As to expression, expressed in roots, shoots and leaves.

The protein resides in the nucleus membrane. It is found in the endoplasmic reticulum. Transcriptional regulator essential for Nod-factor-induced gene expression. Acts downstream of calcium spiking and DMI3, a calcium/calmodulin-dependent protein kinase (CCaMK). Transcription factor involved in the control of strigolactone biosynthesis in roots through the activation of the beta-carotene isomerase D27, which participates in a pathway leading to biosynthesis of strigolactones. This Medicago truncatula (Barrel medic) protein is Protein NODULATION SIGNALING PATHWAY 2.